The sequence spans 295 residues: GDP-polyphosphate phosphotransferase (295 aa).

The segment at 1–28 (MDIPSVDVSTATNDGASSRAKGHRSAAP) is disordered. Positions 7 to 16 (DVSTATNDGA) are enriched in polar residues. His-115 and His-247 each carry phosphohistidine.

It belongs to the polyphosphate kinase 2 (PPK2) family. Class I subfamily. Interacts with Ndk. In terms of processing, autophosphorylated at His-115 and His-247 using polyP as a phosphate donor.

It carries out the reaction [phosphate](n) + GTP = [phosphate](n+1) + GDP. Uses inorganic polyphosphate (polyP) as a donor to convert GDP to GTP. In addition, modulates nucleotide triphosphate synthesis catalyzed by the nucleoside diphosphate kinase (Ndk) in favor of GTP production over CTP or UTP. Plays an important role in survival of M.tuberculosis in macrophages. This Mycobacterium tuberculosis (strain ATCC 25618 / H37Rv) protein is GDP-polyphosphate phosphotransferase.